The primary structure comprises 87 residues: MAGKSSGDRRKPLRGAKGGKNAAPAKSIRVGVIDYKDVATLRKFISERGKIRARRITGVSVQEQRLIARAVKNAREMALLPYAGSGR.

Positions 1–10 (MAGKSSGDRR) are enriched in basic and acidic residues. Residues 1-23 (MAGKSSGDRRKPLRGAKGGKNAA) form a disordered region.

The protein belongs to the bacterial ribosomal protein bS18 family. As to quaternary structure, part of the 30S ribosomal subunit. Forms a tight heterodimer with protein bS6.

In terms of biological role, binds as a heterodimer with protein bS6 to the central domain of the 16S rRNA, where it helps stabilize the platform of the 30S subunit. The polypeptide is Small ribosomal subunit protein bS18 (Clavibacter michiganensis subsp. michiganensis (strain NCPPB 382)).